Reading from the N-terminus, the 231-residue chain is 5'-methylthioadenosine/S-adenosylhomocysteine nucleosidase (231 aa).

Glu-12 acts as the Proton acceptor in catalysis. Substrate contacts are provided by residues Gly-78, Met-153, and 174–175; that span reads ME. Residue Asp-198 is the Proton donor of the active site.

It belongs to the PNP/UDP phosphorylase family. MtnN subfamily.

It carries out the reaction S-adenosyl-L-homocysteine + H2O = S-(5-deoxy-D-ribos-5-yl)-L-homocysteine + adenine. It catalyses the reaction S-methyl-5'-thioadenosine + H2O = 5-(methylsulfanyl)-D-ribose + adenine. The enzyme catalyses 5'-deoxyadenosine + H2O = 5-deoxy-D-ribose + adenine. The protein operates within amino-acid biosynthesis; L-methionine biosynthesis via salvage pathway; S-methyl-5-thio-alpha-D-ribose 1-phosphate from S-methyl-5'-thioadenosine (hydrolase route): step 1/2. Functionally, catalyzes the irreversible cleavage of the glycosidic bond in both 5'-methylthioadenosine (MTA) and S-adenosylhomocysteine (SAH/AdoHcy) to adenine and the corresponding thioribose, 5'-methylthioribose and S-ribosylhomocysteine, respectively. Also cleaves 5'-deoxyadenosine, a toxic by-product of radical S-adenosylmethionine (SAM) enzymes, into 5-deoxyribose and adenine. The chain is 5'-methylthioadenosine/S-adenosylhomocysteine nucleosidase from Bacillus thuringiensis subsp. konkukian (strain 97-27).